A 184-amino-acid polypeptide reads, in one-letter code: NADH-quinone oxidoreductase subunit B 1 (184 aa).

4 residues coordinate [4Fe-4S] cluster: Cys-37, Cys-38, Cys-103, and Cys-132.

This sequence belongs to the complex I 20 kDa subunit family. As to quaternary structure, NDH-1 is composed of 14 different subunits. Subunits NuoB, C, D, E, F, and G constitute the peripheral sector of the complex. Requires [4Fe-4S] cluster as cofactor.

It localises to the cell membrane. The catalysed reaction is a quinone + NADH + 5 H(+)(in) = a quinol + NAD(+) + 4 H(+)(out). NDH-1 shuttles electrons from NADH, via FMN and iron-sulfur (Fe-S) centers, to quinones in the respiratory chain. The immediate electron acceptor for the enzyme in this species is believed to be a menaquinone. Couples the redox reaction to proton translocation (for every two electrons transferred, four hydrogen ions are translocated across the cytoplasmic membrane), and thus conserves the redox energy in a proton gradient. This chain is NADH-quinone oxidoreductase subunit B 1, found in Streptomyces griseus subsp. griseus (strain JCM 4626 / CBS 651.72 / NBRC 13350 / KCC S-0626 / ISP 5235).